The sequence spans 219 residues: Large ribosomal subunit protein uL3 (219 aa).

Belongs to the universal ribosomal protein uL3 family. In terms of assembly, part of the 50S ribosomal subunit. Forms a cluster with proteins L14 and L19.

Its function is as follows. One of the primary rRNA binding proteins, it binds directly near the 3'-end of the 23S rRNA, where it nucleates assembly of the 50S subunit. The sequence is that of Large ribosomal subunit protein uL3 from Salinispora tropica (strain ATCC BAA-916 / DSM 44818 / JCM 13857 / NBRC 105044 / CNB-440).